Consider the following 1191-residue polypeptide: DNA-directed RNA polymerase subunit beta (1191 aa).

Residues 1164–1191 are disordered; sequence EEEDLQPADALNIAPQPDTEEEPVESFE. The segment covering 1181-1191 has biased composition (acidic residues); it reads DTEEEPVESFE.

This sequence belongs to the RNA polymerase beta chain family. In terms of assembly, the RNAP catalytic core consists of 2 alpha, 1 beta, 1 beta' and 1 omega subunit. When a sigma factor is associated with the core the holoenzyme is formed, which can initiate transcription.

It catalyses the reaction RNA(n) + a ribonucleoside 5'-triphosphate = RNA(n+1) + diphosphate. DNA-dependent RNA polymerase catalyzes the transcription of DNA into RNA using the four ribonucleoside triphosphates as substrates. The polypeptide is DNA-directed RNA polymerase subunit beta (Lysinibacillus sphaericus (strain C3-41)).